We begin with the raw amino-acid sequence, 271 residues long: Undecaprenyl-diphosphatase (271 aa).

Transmembrane regions (helical) follow at residues 5 to 25 (YALF…FLPV), 45 to 65 (AATF…AVFW), 86 to 106 (TLSL…GLGI), 114 to 134 (LFGP…LIIA), 149 to 169 (ISYK…WPGF), 189 to 209 (AAEF…GLDL), 226 to 246 (VGFI…LALI), and 251 to 271 (FIPF…VFVA).

Belongs to the UppP family.

The protein resides in the cell inner membrane. The catalysed reaction is di-trans,octa-cis-undecaprenyl diphosphate + H2O = di-trans,octa-cis-undecaprenyl phosphate + phosphate + H(+). Its function is as follows. Catalyzes the dephosphorylation of undecaprenyl diphosphate (UPP). Confers resistance to bacitracin. The sequence is that of Undecaprenyl-diphosphatase from Aeromonas salmonicida (strain A449).